The chain runs to 372 residues: MASATSTPTIADGNSNKESVATSRSPHTHDLNFELPEEYEMINLIGQGAYGVVCAALHKPSGLKVAVKKIHPFNHPVFCLRTLREIKLLRHFRHENIISILDILPPPSYQELEDVYIVQELMETDLYRVIRSQPLSDDHCQYFTYQILRALKAMHSAGVVHRDLKPSNLLLNANCDLKVADFGLARSTTAQGGNPGFMTEYVATRWYRAPEIMLSFREYSKAIDLWSTGCILAEMLSARPLFPGKDYHSQITLILNILGTPTMDDFSRIKSARARKYIKSLPFTPKVSFKALFPQASPDAIDLLEKLLTFNPDKRITAEEALKHPYVAAYHDASDEPTASPMPPNLVDLYCNKEDLEIPVLKALIFREVNFR.

The span at 1–25 shows a compositional bias: polar residues; sequence MASATSTPTIADGNSNKESVATSRS. Residues 1–29 are disordered; sequence MASATSTPTIADGNSNKESVATSRSPHTH. The Protein kinase domain occupies 39 to 327; it reads YEMINLIGQG…AEEALKHPYV (289 aa). ATP contacts are provided by residues 45–53 and Lys-68; that span reads IGQGAYGVV. The Proton acceptor role is filled by Asp-163. The residue at position 199 (Thr-199) is a Phosphothreonine. The TXY motif lies at 199–201; it reads TEY. Tyr-201 carries the phosphotyrosine modification.

Belongs to the protein kinase superfamily. CMGC Ser/Thr protein kinase family. MAP kinase subfamily. Mg(2+) is required as a cofactor. Dually phosphorylated on Thr-199 and Tyr-201, which activates the enzyme.

It localises to the nucleus. It carries out the reaction L-seryl-[protein] + ATP = O-phospho-L-seryl-[protein] + ADP + H(+). The enzyme catalyses L-threonyl-[protein] + ATP = O-phospho-L-threonyl-[protein] + ADP + H(+). Activated by tyrosine and threonine phosphorylation. Its function is as follows. Involved in mating signal transduction pathway. This Schizosaccharomyces pombe (strain 972 / ATCC 24843) (Fission yeast) protein is Mitogen-activated protein kinase spk1 (spk1).